The chain runs to 678 residues: Glycine--tRNA ligase beta subunit (678 aa).

Belongs to the class-II aminoacyl-tRNA synthetase family. Tetramer of two alpha and two beta subunits.

The protein localises to the cytoplasm. It carries out the reaction tRNA(Gly) + glycine + ATP = glycyl-tRNA(Gly) + AMP + diphosphate. The chain is Glycine--tRNA ligase beta subunit from Streptococcus pneumoniae (strain Hungary19A-6).